A 586-amino-acid chain; its full sequence is Eukaryotic translation initiation factor 3 subunit D (586 aa).

Residues 102–176 (SAKRTFGRGG…DKPQRTREPS (75 aa)) are disordered. The span at 162–174 (GWKDYDKPQRTRE) shows a compositional bias: basic and acidic residues. Residues 301–315 (SLDLVTVNENAADAP) are RNA gate. The disordered stretch occupies residues 567-586 (EEEEEVAAEEQEAAEEEAEE).

It belongs to the eIF-3 subunit D family. As to quaternary structure, component of the eukaryotic translation initiation factor 3 (eIF-3) complex.

It localises to the cytoplasm. In terms of biological role, mRNA cap-binding component of the eukaryotic translation initiation factor 3 (eIF-3) complex, which is involved in protein synthesis of a specialized repertoire of mRNAs and, together with other initiation factors, stimulates binding of mRNA and methionyl-tRNAi to the 40S ribosome. The eIF-3 complex specifically targets and initiates translation of a subset of mRNAs involved in cell proliferation. In the eIF-3 complex, eif3d specifically recognizes and binds the 7-methylguanosine cap of a subset of mRNAs. This is Eukaryotic translation initiation factor 3 subunit D from Aspergillus niger (strain ATCC MYA-4892 / CBS 513.88 / FGSC A1513).